The primary structure comprises 238 residues: MSIFIQLNNISVNFNNRSILSNISLALTPNCILTLIGPNGAGKSTLVRVILGLLKPNQGKIFFKNNLRIGYIPQKLNLHSTLPITVNRFMNLSYFNDKNYIQGMLSRINIIHLKHHPLQKLSGGEMQKVLLARALLKKPELLVLDEPTQGIDIIGKIAFYKLVNQIKNELKCSILMVSHDLSIVMANTDKVICLNNHICCSGPPETISKNSEFIAIFGNIGKNYLALYRHRHNHHHDF.

In terms of domain architecture, ABC transporter spans 5-220; the sequence is IQLNNISVNF…SEFIAIFGNI (216 aa). 37 to 44 is an ATP binding site; sequence GPNGAGKS.

Belongs to the ABC transporter superfamily. Zinc importer (TC 3.A.1.15.5) family. In terms of assembly, the complex is composed of two ATP-binding proteins (ZnuC), two transmembrane proteins (ZnuB) and a solute-binding protein (ZnuA).

It localises to the cell membrane. It catalyses the reaction Zn(2+)(out) + ATP(in) + H2O(in) = Zn(2+)(in) + ADP(in) + phosphate(in) + H(+)(in). Functionally, part of the ABC transporter complex ZnuABC involved in zinc import. Responsible for energy coupling to the transport system. The chain is Zinc import ATP-binding protein ZnuC from Buchnera aphidicola subsp. Baizongia pistaciae (strain Bp).